A 329-amino-acid polypeptide reads, in one-letter code: 2-oxoglutarate-dependent dioxygenase htyE (329 aa).

The region spanning 175–289 (NTSELRLLHY…RYSVAYFGKP (115 aa)) is the Fe2OG dioxygenase domain. Fe cation contacts are provided by histidine 201, aspartate 203, and histidine 261. Arginine 280 contributes to the 2-oxoglutarate binding site.

This sequence belongs to the iron/ascorbate-dependent oxidoreductase family. The cofactor is Fe(2+).

Its pathway is antifungal biosynthesis. Its function is as follows. 2-oxoglutarate-dependent dioxygenase; part of the gene cluster that mediates the de novo generation of L-homotyrosine from acetyl-CoA and 4-hydroxyphenyl-pyruvate. L-homotyrosine is a building block of echinocandin B, a fungal lipidated cyclic hexapeptide that acts as an antifungal agent. L-homotyrosine 4-hydroxyphenyl-pyruvate first undergoes an aldol-type condensation by htyA with the C-2 of acetyl-CoA followed by the release of CoA to form 2-(4-hydroxybenzyl)-malate. This is followed by isomerization of 2-(4-hydroxy-benzyl)-malate to 3-(4-hydroxybenzyl)-malate by htyD. Thereafter, 3-(4-hydroxybenzyl)-malate undergoes decarboxylation and oxidation to form 2-oxo-4-(4-hydroxybenzyl)butanoic acid, coupled to reduction of NAD(+) to NADH by htyC. The product then undergoes transamination catalyzed by htyB to form L-homotyrosine. The chain is 2-oxoglutarate-dependent dioxygenase htyE from Aspergillus rugulosus (Emericella rugulosa).